A 183-amino-acid polypeptide reads, in one-letter code: Capsid protein (183 aa).

The segment at 143 to 183 (LPETTVIRRRGRSPRRRTPSPRRRRSQSPRRRRSQSREPQC) is disordered. Over residues 149-176 (IRRRGRSPRRRTPSPRRRRSQSPRRRRS) the composition is skewed to basic residues. Residues S155, S162, and S170 each carry the phosphoserine; by host modification. One copy of the 1; half-length repeat lies at 155 to 161 (SPRRRTP). The tract at residues 155–177 (SPRRRTPSPRRRRSQSPRRRRSQ) is 3 X 8 AA repeats of S-P-R-R-R-[PR]-S-Q. A Bipartite nuclear localization signal motif is present at residues 158 to 175 (RRTPSPRRRRSQSPRRRR). Repeat copies occupy residues 162-169 (SPRRRRSQ) and 170-177 (SPRRRRSQ). An RNA binding region spans residues 177–183 (QSREPQC).

The protein belongs to the orthohepadnavirus core antigen family. Homodimerizes, then multimerizes. Interacts with cytosol exposed regions of viral L glycoprotein present in the reticulum-to-Golgi compartment. Interacts with human FLNB. Phosphorylated form interacts with host importin alpha; this interaction depends on the exposure of the NLS, which itself depends upon genome maturation and/or phosphorylation of the capsid protein. Interacts with host NUP153. In terms of processing, phosphorylated by host SRPK1, SRPK2, and maybe protein kinase C or GAPDH. Phosphorylation is critical for pregenomic RNA packaging. Protein kinase C phosphorylation is stimulated by HBx protein and may play a role in transport of the viral genome to the nucleus at the late step during the viral replication cycle.

Its subcellular location is the virion. The protein resides in the host cytoplasm. Its function is as follows. Self assembles to form an icosahedral capsid. Most capsids appear to be large particles with an icosahedral symmetry of T=4 and consist of 240 copies of capsid protein, though a fraction forms smaller T=3 particles consisting of 180 capsid proteins. Entering capsids are transported along microtubules to the nucleus. Phosphorylation of the capsid is thought to induce exposure of nuclear localization signal in the C-terminal portion of the capsid protein that allows binding to the nuclear pore complex via the importin (karyopherin-) alpha and beta. Capsids are imported in intact form through the nuclear pore into the nuclear basket, where it probably binds NUP153. Only capsids that contain the mature viral genome can release the viral DNA and capsid protein into the nucleoplasm. Immature capsids get stuck in the basket. Capsids encapsulate the pre-genomic RNA and the P protein. Pre-genomic RNA is reverse-transcribed into DNA while the capsid is still in the cytoplasm. The capsid can then either be directed to the nucleus, providing more genomes for transcription, or bud through the endoplasmic reticulum to provide new virions. The polypeptide is Capsid protein (Hepatitis B virus genotype B1 (isolate Japan/Ry30/2002) (HBV-B)).